The sequence spans 373 residues: Outer membrane protein assembly factor BamC (373 aa).

Positions 1–16 (MLKQVTPLVLIAAVTA) are cleaved as a signal peptide. Cysteine 17 carries the N-palmitoyl cysteine lipid modification. Cysteine 17 carries the S-diacylglycerol cysteine lipid modification.

It belongs to the BamC family. Part of the Bam complex.

The protein resides in the cell outer membrane. In terms of biological role, part of the outer membrane protein assembly complex, which is involved in assembly and insertion of beta-barrel proteins into the outer membrane. The sequence is that of Outer membrane protein assembly factor BamC from Shewanella sediminis (strain HAW-EB3).